A 715-amino-acid chain; its full sequence is MVQKYQSPVRVYKHPFELIMAAYERRFPTCPLIPMFVDSDTVSEFKSEDGALHVIERRCKLDIDAPRLLKKIAGVDYVYFVQKNSLNSRDRTLHIEAHNETFSNRVIIHEHCCYTVHPENEDWTCFEQSASLDIKSFFGFESTVEKIAMKHYTSNIKKGKEIIEYYLRQLEEEGITFVPRWTPPPVGPSETCSSSKNQVTSAAVLVPDAAAVMEGLSGENLSSPGTASEPVVGTPDDKLDADYIKRYLGDLTPLQESCLIRLRQWLQETHKGKIPKDEHILRFLRARDFNIDKAREIMCQSLTWRKQHQVDYILDTWTPPQVLLDYYAGGWHHHDKDGRPLYVLRLGQMDTKGLVRALGEEALLRYVLSINEEGLRRCEENTKVFGRPISSWTCLVDLEGLNMRHLWRPGVKALLRIIEVVEANYPETLGRLLILRAPRVFPVLWTLVSPFIDDNTRRKFLIYAGNDYQGPGGLLDYIDKEIIPDFLSGECMCDVPEGGLVPKSLYRTAEELENEDLKLWTETIYQSASVFKGAPHEILIQIVDASSVITWDFDVCKGDIVFNIYHSKRSPQPPKKDSLGAHSITSPGGNNVQLIDKVWQLGRDYSMVESPLICKEGESVQGSHVTRWPGFYILQWKFHTMPACAATNLPRVDDVLASLQVSSHKCKVMYYTEVIGSEDFRGSMTSLESSHSGFSQLSAATTSSSQSQSSSMISR.

The required for interaction and inhibitory function toward RIGI stretch occupies residues 1–510; that stretch reads MVQKYQSPVR…VPKSLYRTAE (510 aa). The 173-residue stretch at 3-175 folds into the PRELI/MSF1 domain; sequence QKYQSPVRVY…YLRQLEEEGI (173 aa). Phosphothreonine is present on T234. The CRAL-TRIO domain occupies 319-495; that stretch reads PPQVLLDYYA…FLSGECMCDV (177 aa). The region spanning 521 to 674 is the GOLD domain; sequence TETIYQSASV…KCKVMYYTEV (154 aa). S586 carries the phosphoserine modification.

Interacts with RIGI (via tandem CARD domain); the interaction is direct. Interacts (via GOLD domain) with SLC18A3; the interaction is direct. Interacts with SLC5A7 (via GOLD domain); the interaction is direct.

It localises to the cytoplasm. Its subcellular location is the golgi apparatus. Functionally, may play a role in innate immunity by inhibiting the antiviral RIG-I signaling pathway. In this pathway, functions as a negative regulator of RIGI, the cytoplasmic sensor of viral nucleic acids. Prevents the interaction of RIGI with MAVS/IPS1, an important step in signal propagation. May also regulate the SLC18A3 and SLC5A7 cholinergic transporters. The sequence is that of SEC14-like protein 1 from Mus musculus (Mouse).